The primary structure comprises 444 residues: Exodeoxyribonuclease 7 large subunit (444 aa).

Belongs to the XseA family. As to quaternary structure, heterooligomer composed of large and small subunits.

The protein localises to the cytoplasm. The catalysed reaction is Exonucleolytic cleavage in either 5'- to 3'- or 3'- to 5'-direction to yield nucleoside 5'-phosphates.. Functionally, bidirectionally degrades single-stranded DNA into large acid-insoluble oligonucleotides, which are then degraded further into small acid-soluble oligonucleotides. The chain is Exodeoxyribonuclease 7 large subunit from Rickettsia canadensis (strain McKiel).